The sequence spans 88 residues: Cell division topological specificity factor (88 aa).

The protein belongs to the MinE family.

Prevents the cell division inhibition by proteins MinC and MinD at internal division sites while permitting inhibition at polar sites. This ensures cell division at the proper site by restricting the formation of a division septum at the midpoint of the long axis of the cell. This chain is Cell division topological specificity factor, found in Pseudoalteromonas translucida (strain TAC 125).